Reading from the N-terminus, the 206-residue chain is Thymidylate kinase (206 aa).

11-18 is a binding site for ATP; it reads GIDGAGKT.

Belongs to the thymidylate kinase family.

The enzyme catalyses dTMP + ATP = dTDP + ADP. Functionally, phosphorylation of dTMP to form dTDP in both de novo and salvage pathways of dTTP synthesis. The protein is Thymidylate kinase of Burkholderia thailandensis (strain ATCC 700388 / DSM 13276 / CCUG 48851 / CIP 106301 / E264).